We begin with the raw amino-acid sequence, 366 residues long: Inhibin alpha chain (366 aa).

Positions Met1–Ser20 are cleaved as a signal peptide. The propeptide occupies Cys21–Arg63. Positions His64 to Arg233 are cleaved as a propeptide — inhibin alpha N-terminal region. N-linked (GlcNAc...) asparagine glycosylation is found at Asn147 and Asn269. Cystine bridges form between Cys263-Cys328, Cys292-Cys363, and Cys296-Cys365.

This sequence belongs to the TGF-beta family. As to quaternary structure, dimeric, linked by one or more disulfide bonds. Activin B is a dimer of alpha and beta-B. Inhibin A is a dimer of alpha and beta-A. Inhibin B is a dimer of alpha and beta-B. Interacts with TGFBR3L; this interaction regulates female fertility. Proteolytic processing yields a number of bioactive forms, consisting either solely of the mature alpha chain, of the most N-terminal propeptide linked through a disulfide bond to the mature alpha chain, or of the entire proprotein.

The protein localises to the secreted. Functionally, inhibins and activins inhibit and activate, respectively, the secretion of follitropin by the pituitary gland. Inhibins/activins are involved in regulating a number of diverse functions such as hypothalamic and pituitary hormone secretion, gonadal hormone secretion, germ cell development and maturation, erythroid differentiation, insulin secretion, nerve cell survival, embryonic axial development or bone growth, depending on their subunit composition. Inhibins appear to oppose the functions of activins. Its function is as follows. Inhibin A is a dimer of alpha/INHA and beta-A/INHBA that functions as a feedback regulator in the hypothalamic-pituitary-gonadal (HPG) axis. Inhibits the secretion of FSH from the anterior pituitary gland by acting on pituitary gonadotrope cells. Antagonizes activin A by binding to the proteoglycan, betaglycan, and forming a stable complex with and, thereby, sequestering type II activin receptors while excluding type I receptor. In terms of biological role, inhibin B is a dimer of alpha and beta-B that plays a crucial role in the regulation of the reproductive system by inhibiting the secretion of follicle-stimulating hormone (FSH) from the anterior pituitary gland. Thereby, maintains reproductive homeostasis in both males and females. Acts as a more potent suppressor of FSH release than inhibin A. Functions as competitive receptor antagonist binding activin type II receptors with high affinity in the presence of the TGF-beta type III coreceptor/TGFBR3L. This chain is Inhibin alpha chain (Inha), found in Mus musculus (Mouse).